Reading from the N-terminus, the 134-residue chain is Cytochrome b (134 aa).

Helical transmembrane passes span 33–53 (FGSLLGVCLAVQILTGVFLAM), 77–98 (WVLRYLHANGASMFFICLYVHV), and 113–133 (WNVGILLLFAVMATAFMGYVL). Heme b contacts are provided by His-83 and His-97.

Belongs to the cytochrome b family. As to quaternary structure, the cytochrome bc1 complex contains 11 subunits: 3 respiratory subunits (MT-CYB, CYC1 and UQCRFS1), 2 core proteins (UQCRC1 and UQCRC2) and 6 low-molecular weight proteins (UQCRH/QCR6, UQCRB/QCR7, UQCRQ/QCR8, UQCR10/QCR9, UQCR11/QCR10 and a cleavage product of UQCRFS1). This cytochrome bc1 complex then forms a dimer. The cofactor is heme b.

It is found in the mitochondrion inner membrane. In terms of biological role, component of the ubiquinol-cytochrome c reductase complex (complex III or cytochrome b-c1 complex) that is part of the mitochondrial respiratory chain. The b-c1 complex mediates electron transfer from ubiquinol to cytochrome c. Contributes to the generation of a proton gradient across the mitochondrial membrane that is then used for ATP synthesis. This chain is Cytochrome b (MT-CYB), found in Anoura caudifer (Hairy-legged long-tongued bat).